An 870-amino-acid polypeptide reads, in one-letter code: Protein csx2 (870 aa).

The interval 212–251 (TSPEISDAPPLSGNVDPLPINSPPLTNPVARDIDQTEPED) is disordered. Residues 510 to 614 (TSAKQGLLLA…WIEAIQYSIS (105 aa)) enclose the PH domain. Phosphoserine is present on residues Ser625, Ser653, and Ser655. The interval 647-672 (RVASVTSPSRHNSDSKEKKQTKSPSL) is disordered. The span at 657-666 (HNSDSKEKKQ) shows a compositional bias: basic and acidic residues. Residues 670–791 (PSLVKTLKEM…RFIKSSFSHD (122 aa)) form the Arf-GAP domain. The C4-type zinc-finger motif lies at 686–710 (CADCNTTARVEWCAINFPVVLCIDC).

The sequence is that of Protein csx2 (csx2) from Schizosaccharomyces pombe (strain 972 / ATCC 24843) (Fission yeast).